The following is a 382-amino-acid chain: Galactokinase (382 aa).

Position 34 to 37 (34 to 37 (EHTD)) interacts with substrate. 124–130 (GAGLSSS) lines the ATP pocket. Residues S130 and E162 each contribute to the Mg(2+) site. D174 functions as the Proton acceptor in the catalytic mechanism. Y223 lines the substrate pocket.

The protein belongs to the GHMP kinase family. GalK subfamily.

It localises to the cytoplasm. It carries out the reaction alpha-D-galactose + ATP = alpha-D-galactose 1-phosphate + ADP + H(+). It participates in carbohydrate metabolism; galactose metabolism. Catalyzes the transfer of the gamma-phosphate of ATP to D-galactose to form alpha-D-galactose-1-phosphate (Gal-1-P). The sequence is that of Galactokinase from Shigella boydii serotype 4 (strain Sb227).